The following is a 171-amino-acid chain: Large ribosomal subunit protein uL10 (171 aa).

Belongs to the universal ribosomal protein uL10 family. As to quaternary structure, part of the ribosomal stalk of the 50S ribosomal subunit. The N-terminus interacts with L11 and the large rRNA to form the base of the stalk. The C-terminus forms an elongated spine to which L12 dimers bind in a sequential fashion forming a multimeric L10(L12)X complex.

Forms part of the ribosomal stalk, playing a central role in the interaction of the ribosome with GTP-bound translation factors. This Erythrobacter litoralis (strain HTCC2594) protein is Large ribosomal subunit protein uL10.